The sequence spans 91 residues: MARVTVQDAVEKIGNRFDLVLVAARRARQMQVGGKDPLVPEENDKTTVIALREIEEGLINNQILDVRERQEQQEQEAAELQAVTAIAEGRR.

It belongs to the RNA polymerase subunit omega family. In terms of assembly, the RNAP catalytic core consists of 2 alpha, 1 beta, 1 beta' and 1 omega subunit. When a sigma factor is associated with the core the holoenzyme is formed, which can initiate transcription. The rRNA transcription and antitermination complex (rrnTAC) consists of RNAP, NusA, NusB, NusE (rpsJ), NusG, SubB, ribosomal protein S4, DNA and precursor rRNA; S4 is more flexible than other subunits.

It carries out the reaction RNA(n) + a ribonucleoside 5'-triphosphate = RNA(n+1) + diphosphate. Promotes RNA polymerase (RNAP) assembly. Latches the N- and C-terminal regions of the beta' subunit thereby facilitating its interaction with the beta and alpha subunits. Its function is as follows. Part of the processive rRNA transcription and antitermination complex (rrnTAC). The complex forms an RNA-chaperone ring around the RNA exit tunnel of RNAP. It supports rapid transcription and antitermination of rRNA operons, cotranscriptional rRNA folding, and annealing of distal rRNA regions to allow correct ribosome biogenesis. The sequence is that of DNA-directed RNA polymerase subunit omega (rpoZ) from Escherichia coli (strain K12).